The primary structure comprises 84 residues: Putative membrane protein insertion efficiency factor (84 aa).

The protein belongs to the UPF0161 family.

The protein localises to the cell inner membrane. Could be involved in insertion of integral membrane proteins into the membrane. This Shewanella baltica (strain OS195) protein is Putative membrane protein insertion efficiency factor.